Reading from the N-terminus, the 281-residue chain is Structural protein 26 (281 aa).

Hydrophobic stretches follow at residues 8–28 (FVIS…FPAL), 196–216 (VVGW…VTIG), 219–239 (LLIF…ITTA), and 255–275 (IVAI…ALAI).

It is found in the virion. This chain is Structural protein 26, found in Haloarcula hispanica (His1V).